A 437-amino-acid polypeptide reads, in one-letter code: Inactive peptidyl-prolyl cis-trans isomerase shutdown (437 aa).

Residues 92 to 178 (DSEVTIHYAA…RPEPALFVIV (87 aa)) form the PPIase FKBP-type domain. 3 TPR repeats span residues 209–242 (VNALRADAKELYKKKKYVKAIKNYQQAISVLRLS), 258–294 (VNAYLNLAVCYYKTNKPKHVLNMCECLDRLIDTEKHC), and 295–327 (KALYYYGKAHEMLGKTEMAIKYYKKALKLEPKN).

Belongs to the FKBP6 family. Interacts with Hsp83.

It is found in the cytoplasm. Functionally, co-chaperone required during oogenesis to repress transposable elements and prevent their mobilization, which is essential for the germline integrity. Acts via the piRNA metabolic process, which mediates the repression of transposable elements during meiosis by forming complexes composed of piRNAs and Piwi proteins and govern the methylation and subsequent repression of transposons. Acts as a co-chaperone via its interaction with Hsp83/HSP90 and is required for the biogenesis of all three piRNA major populations. The protein is Inactive peptidyl-prolyl cis-trans isomerase shutdown (shu) of Bombyx mori (Silk moth).